A 150-amino-acid chain; its full sequence is Large ribosomal subunit protein bL9 (150 aa).

The protein belongs to the bacterial ribosomal protein bL9 family.

Functionally, binds to the 23S rRNA. The polypeptide is Large ribosomal subunit protein bL9 (Neisseria meningitidis serogroup C / serotype 2a (strain ATCC 700532 / DSM 15464 / FAM18)).